Here is a 468-residue protein sequence, read N- to C-terminus: BTB and MATH domain-containing protein 45 (468 aa).

Positions 7–124 (VFELSHVFKD…DDSIIIEVLV (118 aa)) constitute an MATH domain. BTB domains are found at residues 148 to 215 (SDGI…IDDD) and 304 to 368 (SDVI…IDDL).

This is BTB and MATH domain-containing protein 45 (bath-45) from Caenorhabditis elegans.